We begin with the raw amino-acid sequence, 362 residues long: NAC domain-containing protein 5 (362 aa).

In terms of domain architecture, NAC spans 3–151 (NPVGFRFRPT…TYTLCKVKFK (149 aa)). The DNA-binding element occupies 107 to 157 (IGEKRVLVFKNHGGSKSDWAMHEYHATFSSPNQIMTYTLCKVKFKGERREF). Residues 240–266 (DDRNNHTPQKPLTGVFSDHSTDGSDSD) are disordered.

The protein resides in the nucleus. This chain is NAC domain-containing protein 5 (NAC005), found in Arabidopsis thaliana (Mouse-ear cress).